A 323-amino-acid chain; its full sequence is Cyclin-H (323 aa).

Residue S5 is modified to Phosphoserine; by CDK8. S132 bears the Phosphoserine mark. Residues 295 to 323 are disordered; the sequence is KGYEDDDYVSKKPKQEEEEWTDDDLVDSL. S304 carries the phosphoserine; by CDK8 modification. Residues 310–323 show a composition bias toward acidic residues; it reads EEEEWTDDDLVDSL. At T315 the chain carries Phosphothreonine. A Phosphoserine modification is found at S322.

The protein belongs to the cyclin family. Cyclin C subfamily. In terms of assembly, associates primarily with CDK7 and MAT1 to form the CAK complex. CAK can further associate with the core-TFIIH to form the TFIIH basal transcription factor. As to expression, expressed in both the germinal and somatic cells of the testis.

Its subcellular location is the nucleus. Regulates CDK7, the catalytic subunit of the CDK-activating kinase (CAK) enzymatic complex. CAK activates the cyclin-associated kinases CDK1, CDK2, CDK4 and CDK6 by threonine phosphorylation. CAK complexed to the core-TFIIH basal transcription factor activates RNA polymerase II by serine phosphorylation of the repetitive C-terminal domain (CTD) of its large subunit (POLR2A), allowing its escape from the promoter and elongation of the transcripts. Involved in cell cycle control and in RNA transcription by RNA polymerase II. Its expression and activity are constant throughout the cell cycle. The protein is Cyclin-H (Ccnh) of Mus musculus (Mouse).